The chain runs to 114 residues: Protein S40-2 (114 aa).

The segment at 23 to 50 is disordered; it reads RYTKLYNSRNDEKKGTRRHETAEKTSPV. Basic and acidic residues predominate over residues 31-45; sequence RNDEKKGTRRHETAE.

It belongs to the senescence regulator S40 family.

It localises to the cytoplasm. This Arabidopsis thaliana (Mouse-ear cress) protein is Protein S40-2.